Here is a 147-residue protein sequence, read N- to C-terminus: Protein-export protein SecB (147 aa).

It belongs to the SecB family. In terms of assembly, homotetramer, a dimer of dimers. One homotetramer interacts with 1 SecA dimer.

It is found in the cytoplasm. In terms of biological role, one of the proteins required for the normal export of preproteins out of the cell cytoplasm. It is a molecular chaperone that binds to a subset of precursor proteins, maintaining them in a translocation-competent state. It also specifically binds to its receptor SecA. The polypeptide is Protein-export protein SecB (Neisseria meningitidis serogroup B (strain ATCC BAA-335 / MC58)).